Here is a 202-residue protein sequence, read N- to C-terminus: Xanthine phosphoribosyltransferase (202 aa).

Residues L20 and N27 each contribute to the xanthine site. 128-132 provides a ligand contact to 5-phospho-alpha-D-ribose 1-diphosphate; the sequence is ASGGT. K156 is a binding site for xanthine.

The protein belongs to the purine/pyrimidine phosphoribosyltransferase family. Xpt subfamily. As to quaternary structure, homodimer.

The protein resides in the cytoplasm. It carries out the reaction XMP + diphosphate = xanthine + 5-phospho-alpha-D-ribose 1-diphosphate. Its pathway is purine metabolism; XMP biosynthesis via salvage pathway; XMP from xanthine: step 1/1. Its function is as follows. Converts the preformed base xanthine, a product of nucleic acid breakdown, to xanthosine 5'-monophosphate (XMP), so it can be reused for RNA or DNA synthesis. The chain is Xanthine phosphoribosyltransferase from Deinococcus geothermalis (strain DSM 11300 / CIP 105573 / AG-3a).